The sequence spans 341 residues: Phenylalanine--tRNA ligase alpha subunit (341 aa).

E253 contacts Mg(2+).

It belongs to the class-II aminoacyl-tRNA synthetase family. Phe-tRNA synthetase alpha subunit type 1 subfamily. In terms of assembly, tetramer of two alpha and two beta subunits. Mg(2+) serves as cofactor.

It localises to the cytoplasm. The enzyme catalyses tRNA(Phe) + L-phenylalanine + ATP = L-phenylalanyl-tRNA(Phe) + AMP + diphosphate + H(+). This Methylococcus capsulatus (strain ATCC 33009 / NCIMB 11132 / Bath) protein is Phenylalanine--tRNA ligase alpha subunit.